Reading from the N-terminus, the 831-residue chain is Periplasmic nitrate reductase (831 aa).

Residues 1–31 constitute a signal peptide (tat-type signal); it reads MKLSRRDFMKANAAVAAAAAAGLTIPTVAKA. Residues 40-96 enclose the 4Fe-4S Mo/W bis-MGD-type domain; it reads IKWDKAPCRFCGTGCGVLVGTQNGRIVASQGDPDSPVNRGLNCVKGYFLPKIMYGKD. 4 residues coordinate [4Fe-4S] cluster: Cys47, Cys50, Cys54, and Cys82. Residues Lys84, Gln151, Asn176, Cys180, 213 to 220, 244 to 248, 263 to 265, Met373, Gln377, Asn483, 509 to 510, Lys532, Asp559, and 719 to 728 each bind Mo-bis(molybdopterin guanine dinucleotide); these read WGSNMAEM, STFEH, QTD, SD, and TGRVLEHWHT. Residue Phe795 participates in substrate binding. Mo-bis(molybdopterin guanine dinucleotide) contacts are provided by Asn803 and Lys820.

This sequence belongs to the prokaryotic molybdopterin-containing oxidoreductase family. NasA/NapA/NarB subfamily. Component of the periplasmic nitrate reductase NapAB complex composed of NapA and NapB. The cofactor is [4Fe-4S] cluster. Requires Mo-bis(molybdopterin guanine dinucleotide) as cofactor. Post-translationally, predicted to be exported by the Tat system. The position of the signal peptide cleavage has not been experimentally proven.

Its subcellular location is the periplasm. The catalysed reaction is 2 Fe(II)-[cytochrome] + nitrate + 2 H(+) = 2 Fe(III)-[cytochrome] + nitrite + H2O. Its function is as follows. Catalytic subunit of the periplasmic nitrate reductase complex NapAB. Receives electrons from NapB and catalyzes the reduction of nitrate to nitrite. The polypeptide is Periplasmic nitrate reductase (Yersinia enterocolitica serotype O:8 / biotype 1B (strain NCTC 13174 / 8081)).